Consider the following 666-residue polypeptide: Enzymatic polyprotein (666 aa).

Asp-54 is an active-site residue. The Reverse transcriptase domain occupies 215-445; that stretch reads ENPIDPIKSK…EKINFLGLEI (231 aa).

Belongs to the caulimoviridae enzymatic polyprotein family.

It carries out the reaction DNA(n) + a 2'-deoxyribonucleoside 5'-triphosphate = DNA(n+1) + diphosphate. In terms of biological role, encodes for at least two polypeptides: protease (PR) and reverse transcriptase (RT). The protease processes the polyprotein in cis. Reverse transcriptase is multifunctional enzyme that converts the viral RNA genome into dsDNA in viral cytoplasmic capsids. This enzyme displays a DNA polymerase activity that can copy either DNA or RNA templates, and a ribonuclease H (RNase H) activity that cleaves the RNA strand of RNA-DNA heteroduplexes in a partially processive 3'- to 5'-endonucleasic mode. Neo-synthesized pregenomic RNA (pgRNA) are encapsidated, and reverse-transcribed inside the nucleocapsid. Partial (+)DNA is synthesized from the (-)DNA template and generates the relaxed circular DNA (RC-DNA) genome. After budding and infection, the RC-DNA migrates in the nucleus, and is converted into a plasmid-like covalently closed circular DNA (cccDNA). The chain is Enzymatic polyprotein from Figwort mosaic virus (strain DxS) (FMV).